The following is a 178-amino-acid chain: CDP-archaeol synthase (178 aa).

Transmembrane regions (helical) follow at residues 3–23, 55–75, 91–111, 125–145, and 149–169; these read IIYL…ANAT, TFFG…IFNL, GIVG…GSFI, ILDQ…FAPV, and MGIF…IIAY.

This sequence belongs to the CDP-archaeol synthase family. It depends on Mg(2+) as a cofactor.

It localises to the cell membrane. The enzyme catalyses 2,3-bis-O-(geranylgeranyl)-sn-glycerol 1-phosphate + CTP + H(+) = CDP-2,3-bis-O-(geranylgeranyl)-sn-glycerol + diphosphate. It participates in membrane lipid metabolism; glycerophospholipid metabolism. Catalyzes the formation of CDP-2,3-bis-(O-geranylgeranyl)-sn-glycerol (CDP-archaeol) from 2,3-bis-(O-geranylgeranyl)-sn-glycerol 1-phosphate (DGGGP) and CTP. This reaction is the third ether-bond-formation step in the biosynthesis of archaeal membrane lipids. The sequence is that of CDP-archaeol synthase from Methanococcus aeolicus (strain ATCC BAA-1280 / DSM 17508 / OCM 812 / Nankai-3).